The chain runs to 106 residues: Met repressor (106 aa).

This sequence belongs to the MetJ family. As to quaternary structure, homodimer.

Its subcellular location is the cytoplasm. In terms of biological role, this regulatory protein, when combined with SAM (S-adenosylmethionine) represses the expression of the methionine regulon and of enzymes involved in SAM synthesis. The protein is Met repressor of Vibrio atlanticus (strain LGP32) (Vibrio splendidus (strain Mel32)).